We begin with the raw amino-acid sequence, 173 residues long: Transcription factor E (173 aa).

Positions 3–86 (DDPLVKSLLT…SWKFEEQEVI (84 aa)) constitute an HTH TFE/IIEalpha-type domain.

Belongs to the TFE family. In terms of assembly, monomer. Interaction with RNA polymerase subunits RpoF and RpoE is necessary for Tfe stimulatory transcription activity. Able to interact with Tbp and RNA polymerase in the absence of DNA promoter. Interacts both with the preinitiation and elongation complexes.

In terms of biological role, transcription factor that plays a role in the activation of archaeal genes transcribed by RNA polymerase. Facilitates transcription initiation by enhancing TATA-box recognition by TATA-box-binding protein (Tbp), and transcription factor B (Tfb) and RNA polymerase recruitment. Not absolutely required for transcription in vitro, but particularly important in cases where Tbp or Tfb function is not optimal. It dynamically alters the nucleic acid-binding properties of RNA polymerases by stabilizing the initiation complex and destabilizing elongation complexes. Seems to translocate with the RNA polymerase following initiation and acts by binding to the non template strand of the transcription bubble in elongation complexes. The sequence is that of Transcription factor E from Methanobrevibacter smithii (strain ATCC 35061 / DSM 861 / OCM 144 / PS).